Reading from the N-terminus, the 293-residue chain is Elongation factor Ts (293 aa).

Residues 80–83 form an involved in Mg(2+) ion dislocation from EF-Tu region; that stretch reads TDFV.

This sequence belongs to the EF-Ts family.

It localises to the cytoplasm. Associates with the EF-Tu.GDP complex and induces the exchange of GDP to GTP. It remains bound to the aminoacyl-tRNA.EF-Tu.GTP complex up to the GTP hydrolysis stage on the ribosome. In Staphylococcus aureus (strain Newman), this protein is Elongation factor Ts.